A 129-amino-acid chain; its full sequence is Small ribosomal subunit protein bS6 (129 aa).

Belongs to the bacterial ribosomal protein bS6 family.

Its function is as follows. Binds together with bS18 to 16S ribosomal RNA. The protein is Small ribosomal subunit protein bS6 of Microcystis aeruginosa (strain NIES-843 / IAM M-2473).